The chain runs to 199 residues: Probable GTP-binding protein EngB (199 aa).

Positions 28–199 constitute an EngB-type G domain; the sequence is DLPEIALAGR…DSWDAILEQV (172 aa). Residues 36–43, 63–67, 81–84, 148–151, and 180–182 each bind GTP; these read GRSNVGKS, GKTQL, DVPG, TKAD, and FSS. The Mg(2+) site is built by Ser43 and Thr65.

Belongs to the TRAFAC class TrmE-Era-EngA-EngB-Septin-like GTPase superfamily. EngB GTPase family. Mg(2+) is required as a cofactor.

Its function is as follows. Necessary for normal cell division and for the maintenance of normal septation. This Streptococcus pyogenes serotype M28 (strain MGAS6180) protein is Probable GTP-binding protein EngB.